The primary structure comprises 219 residues: Proteasome subunit beta (219 aa).

The propeptide at 1–14 is removed in mature form; by autocatalysis; the sequence is MISNSEYHKEYMKG. The Nucleophile role is filled by threonine 15.

It belongs to the peptidase T1B family. In terms of assembly, the 20S proteasome core is composed of 14 alpha and 14 beta subunits that assemble into four stacked heptameric rings, resulting in a barrel-shaped structure. The two inner rings, each composed of seven catalytic beta subunits, are sandwiched by two outer rings, each composed of seven alpha subunits. The catalytic chamber with the active sites is on the inside of the barrel. Has a gated structure, the ends of the cylinder being occluded by the N-termini of the alpha-subunits. Is capped at one or both ends by the proteasome regulatory ATPase, PAN.

The protein localises to the cytoplasm. The catalysed reaction is Cleavage of peptide bonds with very broad specificity.. Its activity is regulated as follows. The formation of the proteasomal ATPase PAN-20S proteasome complex, via the docking of the C-termini of PAN into the intersubunit pockets in the alpha-rings, triggers opening of the gate for substrate entry. Interconversion between the open-gate and close-gate conformations leads to a dynamic regulation of the 20S proteasome proteolysis activity. Component of the proteasome core, a large protease complex with broad specificity involved in protein degradation. This chain is Proteasome subunit beta, found in Methanococcus maripaludis (strain C5 / ATCC BAA-1333).